The chain runs to 154 residues: Egg-lysin (154 aa).

Residues 1-18 (MKLLVLCIFAMMATLAMS) form the signal peptide.

As to quaternary structure, homodimer. In terms of tissue distribution, sperm.

Dissolves the egg vitelline layer nonenzymatically during fertilization. It creates a hole of about 3 mu-m in diameter through which the sperm pass. The chain is Egg-lysin from Haliotis walallensis (Flat abalone).